Consider the following 197-residue polypeptide: Nucleoid occlusion factor SlmA (197 aa).

Residues 7–67 form the HTH tetR-type domain; sequence INRREHILQC…GLIDFIEESL (61 aa). The segment at residues 30-49 is a DNA-binding region (H-T-H motif); it reads TTAKLAAEVGVSEAALYRHF.

It belongs to the nucleoid occlusion factor SlmA family. Homodimer. Interacts with FtsZ.

It localises to the cytoplasm. The protein localises to the nucleoid. Its function is as follows. Required for nucleoid occlusion (NO) phenomenon, which prevents Z-ring formation and cell division over the nucleoid. Acts as a DNA-associated cell division inhibitor that binds simultaneously chromosomal DNA and FtsZ, and disrupts the assembly of FtsZ polymers. SlmA-DNA-binding sequences (SBS) are dispersed on non-Ter regions of the chromosome, preventing FtsZ polymerization at these regions. This is Nucleoid occlusion factor SlmA from Shewanella loihica (strain ATCC BAA-1088 / PV-4).